A 383-amino-acid chain; its full sequence is DNA dC-&gt;dU-editing enzyme APOBEC-3G (383 aa).

Positions 1-60 (MKPHFRNTVERMYRGTFFYNFNNRPILSRRNTVWLCYEVKTRGPSMPTWGAKIFRGQLYP) are essential for cytoplasmic localization. CMP/dCMP-type deaminase domains are found at residues 29–138 (RRNT…LRIL) and 214–327 (GQRE…LRTL). Threonine 32 carries the post-translational modification Phosphothreonine; by PKA. Zn(2+) contacts are provided by histidine 65, cysteine 97, and cysteine 100. A necessary for homooligomerization region spans residues 209 to 335 (KPWVSGQRET…TLHRDGAKIA (127 aa)). The interaction with DNA stretch occupies residues 213 to 215 (SGQ). A Phosphothreonine; by PKA and CAMK2 modification is found at threonine 218. Histidine 257 lines the Zn(2+) pocket. The active-site Proton donor is the glutamate 259. Residues cysteine 287 and cysteine 290 each coordinate Zn(2+). An interaction with DNA region spans residues 312-319 (RIYDDQGR).

This sequence belongs to the cytidine and deoxycytidylate deaminase family. As to quaternary structure, homodimer. Homooligomer. Can bind RNA to form ribonucleoprotein complexes of high-molecular-mass (HMM) or low-molecular-mass (LMM). HMM is inactive and heterogeneous in protein composition because of binding nonselectively to cellular RNAs, which in turn are associated with variety of cellular proteins. The LMM form which is enzymatically active has few or no RNAs associated. Its ability to form homooligomer is distinct from its ability to assemble into HMM. Interacts with APOBEC3B, APOBEC3F, MOV10, AGO2, EIF4E, EIF4ENIF1, DCP2 and DDX6 in an RNA-dependent manner. Interacts with AGO1, AGO3 and PKA/PRKACA. Zn(2+) is required as a cofactor.

The protein resides in the cytoplasm. Its subcellular location is the nucleus. It is found in the P-body. The enzyme catalyses a 2'-deoxycytidine in single-stranded DNA + H2O + H(+) = a 2'-deoxyuridine in single-stranded DNA + NH4(+). Functionally, DNA deaminase (cytidine deaminase) which acts as an inhibitor of retrovirus replication and retrotransposon mobility. After the penetration of retroviral nucleocapsids into target cells of infection and the initiation of reverse transcription, it can induce the conversion of cytosine to uracil in the minus-sense single-strand viral DNA, leading to G-to-A hypermutations in the subsequent plus-strand viral DNA. The resultant detrimental levels of mutations in the proviral genome, along with a deamination-independent mechanism that works prior to the proviral integration, together exert efficient antiretroviral effects in infected target cells. Selectively targets single-stranded DNA and does not deaminate double-stranded DNA or single- or double-stranded RNA. In Erythrocebus patas (Red guenon), this protein is DNA dC-&gt;dU-editing enzyme APOBEC-3G (APOBEC3G).